The sequence spans 873 residues: Programmed cell death 6-interacting protein (873 aa).

At Ala-2 the chain carries N-acetylalanine. The region spanning 3–397 is the BRO1 domain; that stretch reads SFIWVQLKKT…AQMREATTLA (395 aa). Positions 176 to 508 are interaction with CHMP4A, CHMP4B and CHMP4C; it reads TVDISPDTVG…KFRAVLDKAV (333 aa). At Lys-215 the chain carries N6-acetyllysine. The interval 423-873 is interaction with SDCBP; sequence LTKSTAVVEQ…PPQQSYYPQQ (451 aa). Thr-484 bears the Phosphothreonine mark. The residue at position 486 (Ser-486) is a Phosphoserine. The segment at 508 to 873 is self-association; it reads VQADGQVKER…PPQQSYYPQQ (366 aa). 2 disordered regions span residues 719–808 and 837–873; these read AREP…GPPY and PYPPVYHQSPGQAPYPGPQQPTYPFPQPPQQSYYPQQ. An interaction with TSG101 region spans residues 722-725; that stretch reads PSAP. Residue Ser-735 is modified to Phosphoserine. 2 positions are modified to phosphothreonine: Thr-742 and Thr-745. The segment covering 745-767 has biased composition (pro residues); sequence TPAPRTMPPAKPQPPARPPPPVL. At Arg-749 the chain carries Omega-N-methylarginine. A compositionally biased stretch (low complexity) spans 768-791; the sequence is PANRVPPAAAATAPAGVGTASAAP. Composition is skewed to pro residues over residues 792–808 and 849–865; these read PQTPGSAPPPQAQGPPY and APYPGPQQPTYPFPQPP. An interaction with CEP55 region spans residues 802–811; sequence QAQGPPYPTY.

In terms of assembly, self-associates. Interacts with SH3KBP1. Interacts with PDCD6 in a calcium-dependent manner. Interacts with TSG101 in a calcium-dependent manner; PDCD6IP homooligomerization may be required for TSG101-binding. Interacts with SGSM3. Directly interacts with CHMP4A, CHMP4B and CHMP4C. Directly interacts with CEP55 in a 1:2 stoechiometry; this interaction is required for PDCD6IP targeting to the midbody. May interact with PDGFRB. Interacts with SH3GL1 and SH3GL2/endophilin-1. Forms a complex with SDCBP and SDC2. Found in a complex with F-actin, TJP1/ZO-1 and PARD3. Interacts with CD2AP. Interacts with ARRDC1. Interacts (via BRO1 domain) with the ATG12-ATG3 conjugate; this interaction is bridged by ATG12 and promotes multiple PDCD6IP-mediated functions such as endolysosomal trafficking, macroautophagy and exosome biogenesis. In terms of processing, may be phosphorylated on tyrosine residues by activated PDGFRB. Expressed in astrocytes and glioma cells.

It is found in the cytoplasm. Its subcellular location is the cytosol. The protein resides in the melanosome. The protein localises to the cytoskeleton. It localises to the microtubule organizing center. It is found in the centrosome. Its subcellular location is the secreted. The protein resides in the extracellular exosome. The protein localises to the cell junction. It localises to the tight junction. It is found in the midbody. Its subcellular location is the midbody ring. Multifunctional protein involved in endocytosis, multivesicular body biogenesis, membrane repair, cytokinesis, apoptosis and maintenance of tight junction integrity. Class E VPS protein involved in concentration and sorting of cargo proteins of the multivesicular body (MVB) for incorporation into intralumenal vesicles (ILVs) that are generated by invagination and scission from the limiting membrane of the endosome. Binds to the phospholipid lysobisphosphatidic acid (LBPA) which is abundant in MVBs internal membranes. The MVB pathway requires the sequential function of ESCRT-O, -I,-II and -III complexes. The ESCRT machinery also functions in topologically equivalent membrane fission events, such as the terminal stages of cytokinesis. Adapter for a subset of ESCRT-III proteins, such as CHMP4, to function at distinct membranes. Required for completion of cytokinesis. May play a role in the regulation of both apoptosis and cell proliferation. Regulates exosome biogenesis in concert with SDC1/4 and SDCBP. By interacting with F-actin, PARD3 and TJP1 secures the proper assembly and positioning of actomyosin-tight junction complex at the apical sides of adjacent epithelial cells that defines a spatial membrane domain essential for the maintenance of epithelial cell polarity and barrier. The protein is Programmed cell death 6-interacting protein of Rattus norvegicus (Rat).